We begin with the raw amino-acid sequence, 225 residues long: NAD(P)H-quinone oxidoreductase subunit K, chloroplastic (225 aa).

[4Fe-4S] cluster contacts are provided by C43, C44, C108, and C139.

It belongs to the complex I 20 kDa subunit family. In terms of assembly, NDH is composed of at least 16 different subunits, 5 of which are encoded in the nucleus. [4Fe-4S] cluster is required as a cofactor.

It is found in the plastid. The protein localises to the chloroplast thylakoid membrane. It carries out the reaction a plastoquinone + NADH + (n+1) H(+)(in) = a plastoquinol + NAD(+) + n H(+)(out). The enzyme catalyses a plastoquinone + NADPH + (n+1) H(+)(in) = a plastoquinol + NADP(+) + n H(+)(out). Its function is as follows. NDH shuttles electrons from NAD(P)H:plastoquinone, via FMN and iron-sulfur (Fe-S) centers, to quinones in the photosynthetic chain and possibly in a chloroplast respiratory chain. The immediate electron acceptor for the enzyme in this species is believed to be plastoquinone. Couples the redox reaction to proton translocation, and thus conserves the redox energy in a proton gradient. The polypeptide is NAD(P)H-quinone oxidoreductase subunit K, chloroplastic (Agrostis stolonifera (Creeping bentgrass)).